A 330-amino-acid polypeptide reads, in one-letter code: Glycerol-3-phosphate dehydrogenase [NAD(P)+] 1 (330 aa).

NADPH contacts are provided by Trp15, Arg35, and Lys105. Sn-glycerol 3-phosphate-binding residues include Lys105, Gly133, and Thr135. Ala137 is a binding site for NADPH. Sn-glycerol 3-phosphate-binding residues include Lys188, Asp241, Ser251, Arg252, and Asn253. Lys188 acts as the Proton acceptor in catalysis. Residue Arg252 participates in NADPH binding. NADPH-binding residues include Ile276 and Glu278.

This sequence belongs to the NAD-dependent glycerol-3-phosphate dehydrogenase family.

The protein localises to the cytoplasm. The catalysed reaction is sn-glycerol 3-phosphate + NAD(+) = dihydroxyacetone phosphate + NADH + H(+). It catalyses the reaction sn-glycerol 3-phosphate + NADP(+) = dihydroxyacetone phosphate + NADPH + H(+). It participates in membrane lipid metabolism; glycerophospholipid metabolism. In terms of biological role, catalyzes the reduction of the glycolytic intermediate dihydroxyacetone phosphate (DHAP) to sn-glycerol 3-phosphate (G3P), the key precursor for phospholipid synthesis. This chain is Glycerol-3-phosphate dehydrogenase [NAD(P)+] 1, found in Sphingopyxis alaskensis (strain DSM 13593 / LMG 18877 / RB2256) (Sphingomonas alaskensis).